A 1013-amino-acid chain; its full sequence is Prominin-like protein (1013 aa).

The helical transmembrane segment at 32–52 (IAYLAICGLSVAIFGFALATL) threads the bilayer. N-linked (GlcNAc...) asparagine glycans are attached at residues Asn-99 and Asn-116. 3 helical membrane-spanning segments follow: residues 215 to 235 (CGIC…IAFV), 489 to 509 (VVSL…IFAL), and 535 to 555 (LLLA…VGLF). N-linked (GlcNAc...) asparagine glycans are attached at residues Asn-576, Asn-618, Asn-803, and Asn-824. A helical membrane pass occupies residues 852-872 (INGFWVGILLCALLFLPILFV). The disordered stretch occupies residues 918–1013 (ANVPKKRRKA…YYYPGASEQD (96 aa)). A glycan (N-linked (GlcNAc...) asparagine) is linked at Asn-949. Gly residues predominate over residues 950–963 (RSGGDRGGGGGDGA).

It belongs to the prominin family.

The protein localises to the membrane. The chain is Prominin-like protein from Drosophila melanogaster (Fruit fly).